The sequence spans 542 residues: Neutral amino acid transporter B(0) (542 aa).

At M1 the chain carries N-acetylmethionine. Topologically, residues 1–52 (MVADPPRGDSKGLAAAEPTANGGLALASIEDQGEAAGGCCGSRDRVRRCLRA) are cytoplasmic. A helical transmembrane segment spans residues 53 to 82 (NLLVLLTVVAVVVGVALGLGVSGAGGALAL). Residues 83–95 (GPERLSAFVFPGE) are Extracellular-facing. The helical transmembrane segment at 96–117 (LLLRLLRMIILPLVVCSLIGGA) threads the bilayer. The Cytoplasmic segment spans residues 118-131 (ASLDPGALGRLGAW). A helical membrane pass occupies residues 132 to 154 (ALLFFLVTTLLASALGVALALAL). Over 155-225 (QPGAASAAIN…GTRVKVPVGQ (71 aa)) the chain is Extracellular. N164 and N213 each carry an N-linked (GlcNAc...) asparagine glycan. Residues 226–249 (EVEGMNILGLVVFAIVFGVALRKL) traverse the membrane as a helical segment. Topologically, residues 250–258 (GPEGELLIR) are cytoplasmic. The helical transmembrane segment at 259-286 (FFNSFNEATMVLVSWIMWYAPVGIMFLV) threads the bilayer. Over 287 to 307 (AGKIVEMEDVGLLFARLGKYI) the chain is Extracellular. A helical transmembrane segment spans residues 308-329 (LCCLLGHAIHGLLVLPLIYFLF). Over 330–334 (TRKNP) the chain is Cytoplasmic. Residues 335–365 (YRFLWGIVTPLATAFGTSSSSATLPLMMKCV) constitute an intramembrane region (discontinuously helical). Residues 366–374 (EENNGVAKH) lie on the Cytoplasmic side of the membrane. The chain crosses the membrane as a helical span at residues 375–401 (ISRFILPIGATVNMDGAALFQCVAAVF). Na(+) contacts are provided by G383, T385, and N387. Topologically, residues 402 to 414 (IAQLSEQSLDFVK) are extracellular. The discontinuously helical intramembrane region spans 415 to 448 (IITILVTATASSVGAAGIPAGGVLTLAIILEAVN). Over 449–461 (LPVDHISLILAVD) the chain is Extracellular. The chain crosses the membrane as a helical span at residues 462–483 (WLVDRSCTVLNVEGDALGAGLL). Positions 472 and 476 each coordinate Na(+). At 484 to 542 (QNYVDRTEVRSTEPELIQVKSELPLDPLPAPTEEGNPLLRHYRGPAGDATVASEKESVM) the chain is on the cytoplasmic side. At S494 the chain carries Phosphoserine. T495 carries the post-translational modification Phosphothreonine. A phosphoserine mark is found at S504, S536, and S540. Positions 509–542 (DPLPAPTEEGNPLLRHYRGPAGDATVASEKESVM) are disordered.

The protein belongs to the dicarboxylate/amino acid:cation symporter (DAACS) (TC 2.A.23) family. SLC1A5 subfamily. Homotrimer.

The protein resides in the cell membrane. The protein localises to the melanosome. The catalysed reaction is L-glutamine(out) + L-serine(in) + Na(+)(out) = L-glutamine(in) + L-serine(out) + Na(+)(in). It catalyses the reaction L-glutamine(in) + L-serine(out) + Na(+)(out) = L-glutamine(out) + L-serine(in) + Na(+)(in). The enzyme catalyses L-threonine(in) + L-glutamine(out) + Na(+)(out) = L-threonine(out) + L-glutamine(in) + Na(+)(in). It carries out the reaction L-threonine(out) + L-glutamine(in) + Na(+)(out) = L-threonine(in) + L-glutamine(out) + Na(+)(in). The catalysed reaction is L-asparagine(in) + L-glutamine(out) + Na(+)(out) = L-asparagine(out) + L-glutamine(in) + Na(+)(in). It catalyses the reaction L-asparagine(out) + L-glutamine(in) + Na(+)(out) = L-asparagine(in) + L-glutamine(out) + Na(+)(in). The enzyme catalyses L-glutamine(in) + L-alanine(out) + Na(+)(out) = L-glutamine(out) + L-alanine(in) + Na(+)(in). It carries out the reaction L-valine(out) + L-glutamine(in) + Na(+)(out) = L-valine(in) + L-glutamine(out) + Na(+)(in). The catalysed reaction is L-glutamine(in) + L-methionine(out) + Na(+)(out) = L-glutamine(out) + L-methionine(in) + Na(+)(in). It catalyses the reaction L-glutamine(in) + L-glutamate(out) + Na(+)(out) + H(+)(out) = L-glutamine(out) + L-glutamate(in) + Na(+)(in) + H(+)(in). The enzyme catalyses D-serine(in) + L-glutamine(out) + Na(+)(out) = D-serine(out) + L-glutamine(in) + Na(+)(in). It carries out the reaction D-serine(in) + L-alanine(out) + Na(+)(out) = D-serine(out) + L-alanine(in) + Na(+)(in). The catalysed reaction is nitrate(in) = nitrate(out). It catalyses the reaction iodide(out) = iodide(in). The enzyme catalyses thiocyanate(in) = thiocyanate(out). Functionally, sodium-coupled antiporter of neutral amino acids. In a tri-substrate transport cycle, exchanges neutral amino acids between the extracellular and intracellular compartments, coupled to the inward cotransport of at least one sodium ion. The preferred substrate is the essential amino acid L-glutamine, a precursor for biosynthesis of proteins, nucleotides and amine sugars as well as an alternative fuel for mitochondrial oxidative phosphorylation. Exchanges L-glutamine with other neutral amino acids such as L-serine, L-threonine and L-asparagine in a bidirectional way. Provides L-glutamine to proliferating stem and activated cells driving the metabolic switch toward cell differentiation. The transport cycle is usually pH-independent, with the exception of L-glutamate. Transports extracellular L-glutamate coupled to the cotransport of one proton and one sodium ion in exchange for intracellular L-glutamine counter-ion. May provide for L-glutamate uptake in glial cells regulating glutamine/glutamate cycle in the nervous system. Can transport D-amino acids. Mediates D-serine release from the retinal glia potentially affecting NMDA receptor function in retinal neurons. Displays sodium- and amino acid-dependent but uncoupled channel-like anion conductance with a preference SCN(-) &gt;&gt; NO3(-) &gt; I(-) &gt; Cl(-). Through binding of the fusogenic protein syncytin-1/ERVW-1 may mediate trophoblasts syncytialization, the spontaneous fusion of their plasma membranes, an essential process in placental development. This chain is Neutral amino acid transporter B(0) (SLC1A5), found in Macaca fascicularis (Crab-eating macaque).